The primary structure comprises 583 residues: uncharacterized protein (583 aa).

24–140 (ILADIDDEQL…SAMLRAMARM (117 aa)) contributes to the a nucleoside 3',5'-cyclic phosphate binding site. The PNPLA domain maps to 309–469 (LVMAGGGARG…LNNLPANVMC (161 aa)). A GXGXXG motif is present at residues 313–318 (GGGARG). Positions 340 to 344 (GTSSG) match the GXSXG motif. S342 (nucleophile) is an active-site residue. Catalysis depends on D456, which acts as the Proton acceptor. Residues 456 to 458 (DGG) carry the DGA/G motif.

The protein belongs to the NTE family.

This is an uncharacterized protein from Mycobacterium bovis (strain ATCC BAA-935 / AF2122/97).